The primary structure comprises 347 residues: N-acetyl-gamma-glutamyl-phosphate reductase (347 aa).

The active site involves cysteine 152.

The protein belongs to the NAGSA dehydrogenase family. Type 1 subfamily.

Its subcellular location is the cytoplasm. The enzyme catalyses N-acetyl-L-glutamate 5-semialdehyde + phosphate + NADP(+) = N-acetyl-L-glutamyl 5-phosphate + NADPH + H(+). The protein operates within amino-acid biosynthesis; L-arginine biosynthesis; N(2)-acetyl-L-ornithine from L-glutamate: step 3/4. Functionally, catalyzes the NADPH-dependent reduction of N-acetyl-5-glutamyl phosphate to yield N-acetyl-L-glutamate 5-semialdehyde. The protein is N-acetyl-gamma-glutamyl-phosphate reductase of Neisseria meningitidis serogroup C (strain 053442).